A 769-amino-acid chain; its full sequence is Metal transporter CNNM4 (769 aa).

Over 1-175 the chain is Extracellular; it reads MAASAGCYYG…RLRVLEEEKP (175 aa). Residues N99 and N115 are each glycosylated (N-linked (GlcNAc...) asparagine). Residues 175–355 form the CNNM transmembrane domain; sequence PLLPIWLQAC…EPYSGIVREE (181 aa). Residues 176–196 form a helical membrane-spanning segment; it reads LLPIWLQACIIAVLLTLSGIF. Over 197 to 237 the chain is Cytoplasmic; that stretch reads SGLNLGLMALDPMELRVVQRCGTEKEKRYASKIEPVRRKGN. Positions 238–258 form an intramembrane region, helical; it reads YLLCSLLLGNVLVNTTLTALL. At 259–261 the chain is on the cytoplasmic side; that stretch reads DEL. The helical transmembrane segment at 262 to 282 threads the bilayer; that stretch reads IGSGLAAVLASTTGIVVLGEI. The Extracellular segment spans residues 283 to 292; sequence VPQALCSRHG. The chain crosses the membrane as a helical span at residues 293 to 313; that stretch reads LAVGANTLWLTRIFMLLTFPV. Over 314 to 769 the chain is Cytoplasmic; that stretch reads AYPVSRLLDC…SQHSLQHNAV (456 aa). 2 CBS domains span residues 374-435 and 442-508; these read MTKV…CTPL and YSHP…ILDE. Residues 717 to 769 are disordered; that stretch reads LMSSRLDSSPQSPEGGTRKPDSTLSERSEVLEDETTSLLNQRNSQHSLQHNAV. Residues 721 to 730 show a composition bias toward polar residues; that stretch reads RLDSSPQSPE. Residues 732 to 746 are compositionally biased toward basic and acidic residues; it reads GTRKPDSTLSERSEV. Polar residues predominate over residues 752–769; the sequence is TSLLNQRNSQHSLQHNAV.

Belongs to the ACDP family.

The protein localises to the cell membrane. Functionally, probable metal transporter. This Xenopus tropicalis (Western clawed frog) protein is Metal transporter CNNM4 (cnnm4).